Reading from the N-terminus, the 296-residue chain is Bifunctional protein FolD (296 aa).

NADP(+) is bound by residues 168 to 170, Ser197, and Thr238; that span reads GRS.

It belongs to the tetrahydrofolate dehydrogenase/cyclohydrolase family. In terms of assembly, homodimer.

The enzyme catalyses (6R)-5,10-methylene-5,6,7,8-tetrahydrofolate + NADP(+) = (6R)-5,10-methenyltetrahydrofolate + NADPH. The catalysed reaction is (6R)-5,10-methenyltetrahydrofolate + H2O = (6R)-10-formyltetrahydrofolate + H(+). The protein operates within one-carbon metabolism; tetrahydrofolate interconversion. In terms of biological role, catalyzes the oxidation of 5,10-methylenetetrahydrofolate to 5,10-methenyltetrahydrofolate and then the hydrolysis of 5,10-methenyltetrahydrofolate to 10-formyltetrahydrofolate. This is Bifunctional protein FolD from Porphyromonas gingivalis (strain ATCC BAA-308 / W83).